Consider the following 520-residue polypeptide: Retinoic acid receptor RXR-beta (520 aa).

The interval Met-1–Lys-167 is disordered. Residues Met-1–Leu-191 form a modulating region. Arg-25 is modified (omega-N-methylarginine). A compositionally biased stretch (basic and acidic residues) spans Glu-64–Ser-79. Residues Ser-95–Ser-118 show a composition bias toward pro residues. Residues Pro-119 to Pro-130 are compositionally biased toward low complexity. The segment covering Gly-131–Phe-140 has biased composition (pro residues). NR C4-type zinc fingers lie at residues Cys-192–Cys-212 and Cys-228–Cys-252. The nuclear receptor DNA-binding region spans Cys-192 to Met-257. A hinge region spans residues Lys-258–Ile-382. The span at Gln-263 to Asp-275 shows a compositional bias: basic and acidic residues. 2 disordered regions span residues Gln-263–Glu-285 and Gln-300–Val-323. One can recognise an NR LBD domain in the interval Pro-283 to Pro-516. Positions Glu-307–Ser-317 are enriched in gly residues.

This sequence belongs to the nuclear hormone receptor family. NR2 subfamily. Homodimer (in vitro). Heterodimer with other retinoic acid receptor family members. Binds DNA preferentially as a RAR/RXR heterodimer. Interacts with NR1H3. Interacts with AKAP13. As to expression, in all tissues tested, including brain, thymus, spleen and liver.

It is found in the nucleus. Its subcellular location is the cytoplasm. In terms of biological role, receptor for retinoic acid. Retinoic acid receptors bind as heterodimers to their target response elements in response to their ligands, all-trans or 9-cis retinoic acid, and regulate gene expression in various biological processes. The RAR/RXR heterodimers bind to the retinoic acid response elements (RARE). The polypeptide is Retinoic acid receptor RXR-beta (Rxrb) (Mus musculus (Mouse)).